The primary structure comprises 473 residues: Ribonuclease Y (473 aa).

The helical transmembrane segment at 4 to 24 threads the bilayer; sequence LIAFIILLILFVLLITIVPVV. One can recognise a KH domain in the interval 158–218; it reads SLFNIDIIDE…IRREIARIVM (61 aa). An HD domain is found at 285 to 378; sequence ILSHSLEVAE…VKIVDTLSAA (94 aa).

It belongs to the RNase Y family.

The protein localises to the cell membrane. Endoribonuclease that initiates mRNA decay. The protein is Ribonuclease Y of Ureaplasma parvum serovar 3 (strain ATCC 27815 / 27 / NCTC 11736).